We begin with the raw amino-acid sequence, 331 residues long: Ketol-acid reductoisomerase (NADP(+)) (331 aa).

Residues 2 to 182 form the KARI N-terminal Rossmann domain; that stretch reads ARLYYDADAN…GGTRAGILET (181 aa). NADP(+) is bound by residues 25-28, serine 51, serine 53, and 83-86; these read YGSQ and DEVQ. Histidine 108 is a catalytic residue. Glycine 134 is a binding site for NADP(+). Positions 183-328 constitute a KARI C-terminal knotted domain; sequence TFREETETDL…KDLRAMFSWL (146 aa). Positions 191, 195, 227, and 231 each coordinate Mg(2+). Serine 252 provides a ligand contact to substrate.

The protein belongs to the ketol-acid reductoisomerase family. It depends on Mg(2+) as a cofactor.

The enzyme catalyses (2R)-2,3-dihydroxy-3-methylbutanoate + NADP(+) = (2S)-2-acetolactate + NADPH + H(+). The catalysed reaction is (2R,3R)-2,3-dihydroxy-3-methylpentanoate + NADP(+) = (S)-2-ethyl-2-hydroxy-3-oxobutanoate + NADPH + H(+). It participates in amino-acid biosynthesis; L-isoleucine biosynthesis; L-isoleucine from 2-oxobutanoate: step 2/4. It functions in the pathway amino-acid biosynthesis; L-valine biosynthesis; L-valine from pyruvate: step 2/4. Involved in the biosynthesis of branched-chain amino acids (BCAA). Catalyzes an alkyl-migration followed by a ketol-acid reduction of (S)-2-acetolactate (S2AL) to yield (R)-2,3-dihydroxy-isovalerate. In the isomerase reaction, S2AL is rearranged via a Mg-dependent methyl migration to produce 3-hydroxy-3-methyl-2-ketobutyrate (HMKB). In the reductase reaction, this 2-ketoacid undergoes a metal-dependent reduction by NADPH to yield (R)-2,3-dihydroxy-isovalerate. The protein is Ketol-acid reductoisomerase (NADP(+)) of Cyanothece sp. (strain PCC 7425 / ATCC 29141).